The following is a 1009-amino-acid chain: MESFEGQGDSRQSPDNERGDNVQTTGEHDQDPGPGPPSSGASERLVPEESYSRDQQPWGQSRGDENRGWMQRIRRRRRRRAALSGHLLDTEDNVPPWLPPHDIAPYVARNIRDAACRAVKQSHLQALSNLILDSGLDTQHILCFVMAARQRLQDIRRGPLVVEGGVGWRHWLLTSPSQSWPMGYRTATLRTLTPVPNRVGADSIMLTATFGCQNAARTLNTFSATVWTPPHAGPREQERYAREAEVRFLRGKWQRRYRRIYDLIELCGSLHHIWQNLLQTEENLLDFVRFMGVMSSCNNPAVNYWFHKTIGNFKPYYPWNAPPNENPYHARRGIKEHVIQNAFRKAQIQGLSMLATVGEPRGDATSETSSDEDTGRQGSDVELESSDDELPYIDPNMEPVQQRPVMFVSRVPAKKPRKLPWPTPKTHPVKRTNVKTSDRSDKAEAQSTPERPGPSEQSSVTVEPAHPTPVEMPMVILHQPPPVPKPVPVKPTPPPSRRRRGACVVYDDDVIEVIDVETTEDSSSVSQPNKPHRKHQDGFQRSGRRQKRAAPPTVSPSDTGPPAAGPPAAGPPAAGPHILTPPSARPRIMAPPVVRMFMRERQLPQSTGRKPQCFWEMRASREITQMQQEPSSHLQSATQPTMPRPSWVPSVCALSVMDAGKAQPIQSSHLSSMSPTQPISHEEQPRYEDPDAPLDLSLHPDVAAPPAPRAPYQGYQEQPAPQAPYQGYQEQPAPQAPYQGYQEQPAPQAPYQGYQEQPAPQAPYQGYQEQPPPQAPYQGYQEQPAPQAPYQGYQEPPAHGLQSSSYPGYAGPWTPRSQHPCYRHPWAPWSQDPVHGHTQGPWDPRAPHLPPQWDGSAGHGQDQVSQFPHLQSETGPPRLQLSSVPLVSSSAPSWSSPQPRAPIRPIPTRFPPPPMPLQDSMAVGCDSSGTACPSMPFASDYSQGAFTPLDINATTPKRPRVEESSHGPARCSQATAEAQEILSDNSEISVFPKDAKQTDYDASTESELD.

Disordered regions lie at residues 1 to 70, 356 to 504, 516 to 646, 663 to 922, 948 to 971, and 984 to 1009; these read MESF…RGWM, TVGE…GACV, VETT…PRPS, QPIQ…DSMA, PLDINATTPKRPRVEESSHGPARC, and DNSEISVFPKDAKQTDYDASTESELD. Over residues 12-31 the composition is skewed to basic and acidic residues; the sequence is QSPDNERGDNVQTTGEHDQD. Over residues 381–391 the composition is skewed to acidic residues; that stretch reads VELESSDDELP. Over residues 445 to 461 the composition is skewed to polar residues; it reads AQSTPERPGPSEQSSVT. Pro residues-rich tracts occupy residues 479–495 and 563–574; these read QPPPVPKPVPVKPTPPP and AAGPPAAGPPAA. Composition is skewed to polar residues over residues 622 to 641 and 664 to 679; these read EITQMQQEPSSHLQSATQPT and PIQSSHLSSMSPTQPI. The segment covering 680–689 has biased composition (basic and acidic residues); it reads SHEEQPRYED. 2 stretches are compositionally biased toward low complexity: residues 710–769 and 776–798; these read APYQ…GYQE and PYQGYQEQPAPQAPYQGYQEPPA. Positions 862–874 are enriched in polar residues; sequence DQVSQFPHLQSET. Low complexity predominate over residues 876–898; that stretch reads PPRLQLSSVPLVSSSAPSWSSPQ. Residues 899–916 show a composition bias toward pro residues; sequence PRAPIRPIPTRFPPPPMP.

The protein belongs to the herpesviridae EBNA-6 family. Interacts with host CTPB1; this interaction leads to gene repression, but also seems to interfere with the repressive function of CtBP pre-bound to DNA, leading to EBNA6 mediated up-regulation of many host genes. Interacts with host MYC; this interaction enhances MYC stability. Interacts (via N-terminus) with host RBPJ. Interacts (via N-terminus) with host histone H2AX; this interaction facilitates H2AX proteasomal degradation. Interacts with host TP73; this interaction inhibits TP73-mediated apoptotic pathway. Interacts (via N-terminus) with host PIM1; this interaction upregulates and stabilizes PIM1 and induces cell proliferation by inhibiting the growth suppressive properties of p21.

The protein localises to the host nucleus. It is found in the host nucleus matrix. Functionally, plays an essential role for the activation and immortalization of human B-cells. Represses transcription of viral promoters TP1 and Cp through interaction with host RBPJ, and inhibits EBNA2-mediated activation of these promoters. Targets host chromatin through interactions with host transcription factors, especially RBPJ and IRF4. Alternatively, EBNA6 also regulates the transcription of the EBV oncogene LMP1 in a cell cycle-dependent manner. Modulates the activity of several host proteins involved in cell cycle regulation including host cyclin A, MYC, RB, p21 and p27 mainly through binding to the host SCF(SKP2) complex. Inhibits the promoter of host H2AX and targets H2AX to proteasomal degradation in order to promote latency and cell proliferation. Upregulates host PIM1 expression and stabilization. Potentiates PIM1 to promote cell proliferation by inhibiting the growth suppressive properties of p21. The protein is Epstein-Barr nuclear antigen 6 (EBNA6) of Epstein-Barr virus (strain GD1) (HHV-4).